A 405-amino-acid polypeptide reads, in one-letter code: uncharacterized protein (405 aa).

12 helical membrane-spanning segments follow: residues 19–39 (IVSIVMFNFASYLTIGLPLAV), 48–68 (MGFSAFWAGLIISLQYFATLL), 85–105 (IVVFGLCGCFLSGLGYLLADI), 129–149 (SFAGTGSTLWGVGVVGSLHIG), 156–176 (GIVTYGAMAMGAPLGVLCYAW), 178–198 (GLQGLALTVMGVALLAVLLAL), 224–244 (GMALALASAGFGVIATFITLF), 252–272 (GAAFALTLFSVAFVGTRLLFP), 283–303 (VAMICFGVEIIGLLLVGTAAM), 309–329 (IGVLLTGMGFSLVFPALGVVA), 344–364 (TYTVFMDMSLGVTGPLAGLVM), and 366–386 (WAGVPVIYLAAAGLVAMALLL).

The protein belongs to the major facilitator superfamily. YhhS family.

Its subcellular location is the cell inner membrane. This is an uncharacterized protein from Salmonella typhi.